A 638-amino-acid polypeptide reads, in one-letter code: 1-deoxy-D-xylulose-5-phosphate synthase (638 aa).

Residues histidine 75 and 116-118 (AHS) contribute to the thiamine diphosphate site. Aspartate 147 contributes to the Mg(2+) binding site. Thiamine diphosphate contacts are provided by residues 148-149 (GA), asparagine 177, tyrosine 288, and glutamate 370. Mg(2+) is bound at residue asparagine 177.

Belongs to the transketolase family. DXPS subfamily. Homodimer. Mg(2+) serves as cofactor. Thiamine diphosphate is required as a cofactor.

The catalysed reaction is D-glyceraldehyde 3-phosphate + pyruvate + H(+) = 1-deoxy-D-xylulose 5-phosphate + CO2. It functions in the pathway metabolic intermediate biosynthesis; 1-deoxy-D-xylulose 5-phosphate biosynthesis; 1-deoxy-D-xylulose 5-phosphate from D-glyceraldehyde 3-phosphate and pyruvate: step 1/1. Functionally, catalyzes the acyloin condensation reaction between C atoms 2 and 3 of pyruvate and glyceraldehyde 3-phosphate to yield 1-deoxy-D-xylulose-5-phosphate (DXP). The sequence is that of 1-deoxy-D-xylulose-5-phosphate synthase from Cupriavidus necator (strain ATCC 17699 / DSM 428 / KCTC 22496 / NCIMB 10442 / H16 / Stanier 337) (Ralstonia eutropha).